A 208-amino-acid polypeptide reads, in one-letter code: Small ribosomal subunit protein uS4 (208 aa).

An S4 RNA-binding domain is found at 98 to 158 (SRLDNAVYRL…EKSRNMQVID (61 aa)).

The protein belongs to the universal ribosomal protein uS4 family. In terms of assembly, part of the 30S ribosomal subunit. Contacts protein S5. The interaction surface between S4 and S5 is involved in control of translational fidelity.

In terms of biological role, one of the primary rRNA binding proteins, it binds directly to 16S rRNA where it nucleates assembly of the body of the 30S subunit. With S5 and S12 plays an important role in translational accuracy. This is Small ribosomal subunit protein uS4 from Desulfosudis oleivorans (strain DSM 6200 / JCM 39069 / Hxd3) (Desulfococcus oleovorans).